The primary structure comprises 363 residues: Probable cinnamyl alcohol dehydrogenase 6 (363 aa).

Residue Cys-51 participates in Zn(2+) binding. Ser-53 contributes to the NADP(+) binding site. Residues His-73, Glu-74, Cys-104, Cys-107, Cys-110, Cys-118, and Cys-167 each contribute to the Zn(2+) site. NADP(+)-binding positions include Ser-171, 192 to 197, 215 to 220, Thr-255, Gly-279, and 302 to 304; these read GLGGLG, SSTTGK, and SGI.

Belongs to the zinc-containing alcohol dehydrogenase family. As to quaternary structure, homodimer. Requires Zn(2+) as cofactor. In terms of tissue distribution, expressed in the primary and lateral roots, and root caps. Expressed in the hypocotyl, cotyledon veins and hydathodes. In stems, expressed in the vascular cambium, interfascicular cambium and developing xylem. Expressed in the style, anthers, stamen filaments, vascular tissues of sepals, stigmatic regions in flowers, and abscission and style regions of siliques.

The enzyme catalyses (E)-cinnamyl alcohol + NADP(+) = (E)-cinnamaldehyde + NADPH + H(+). It catalyses the reaction (E)-coniferol + NADP(+) = (E)-coniferaldehyde + NADPH + H(+). It carries out the reaction (E)-sinapyl alcohol + NADP(+) = (E)-sinapaldehyde + NADPH + H(+). The catalysed reaction is (E)-4-coumaroyl alcohol + NADP(+) = (E)-4-coumaraldehyde + NADPH + H(+). The enzyme catalyses (E)-caffeyl alcohol + NADP(+) = (E)-caffeyl aldehyde + NADPH + H(+). The protein operates within aromatic compound metabolism; phenylpropanoid biosynthesis. Its function is as follows. Involved in lignin biosynthesis. Catalyzes the final step specific for the production of lignin monomers. Catalyzes the NADPH-dependent reduction of coniferaldehyde, 5-hydroxyconiferaldehyde, sinapaldehyde, 4-coumaraldehyde and caffeyl aldehyde to their respective alcohols. This is Probable cinnamyl alcohol dehydrogenase 6 (CAD6) from Arabidopsis thaliana (Mouse-ear cress).